The following is a 210-amino-acid chain: Superoxide dismutase [Mn], mitochondrial (210 aa).

Mn(2+) contacts are provided by H30, H78, D166, and H170.

Belongs to the iron/manganese superoxide dismutase family. As to quaternary structure, homotetramer. The cofactor is Mn(2+). In terms of processing, the N-terminus is blocked.

It localises to the mitochondrion matrix. The catalysed reaction is 2 superoxide + 2 H(+) = H2O2 + O2. Destroys superoxide anion radicals which are normally produced within the cells and which are toxic to biological systems. This is Superoxide dismutase [Mn], mitochondrial (SOD) from Penicillium chrysogenum (Penicillium notatum).